The chain runs to 233 residues: Forkhead box protein L3 (233 aa).

The fork-head DNA-binding region spans 32–130 (RPAYSYIALI…ENGNYRRRRR (99 aa)). Over residues 125–134 (YRRRRRRRGP) the composition is skewed to basic residues. Positions 125–198 (YRRRRRRRGP…PRDLKFSIDY (74 aa)) are disordered. Residues 175 to 184 (REPPASPAPP) show a composition bias toward pro residues. Basic and acidic residues predominate over residues 185 to 194 (GKEHPRDLKF).

It localises to the nucleus. Probable transcriptional regulator. The polypeptide is Forkhead box protein L3 (Homo sapiens (Human)).